Reading from the N-terminus, the 459-residue chain is MFS-type transporter SLC18B1 (459 aa).

At methionine 1 the chain carries N-acetylmethionine. Residues 1–10 (MDEAGSPAPA) are compositionally biased toward low complexity. Residues 1-27 (MDEAGSPAPAGTGGGDDPGGSTRETSR) are disordered. Topologically, residues 1 to 33 (MDEAGSPAPAGTGGGDDPGGSTRETSRRLSREQ) are cytoplasmic. Position 21 is a phosphoserine (serine 21). Residues 34–54 (IFVLVSAASMNLGCMMTYSIL) traverse the membrane as a helical segment. Topologically, residues 55-70 (GPFFPKEAEKKGASNT) are extracellular. Residues 71-91 (MIGMIFGCYALFELLASLVFG) form a helical membrane-spanning segment. Over 92–100 (KYLVHIGAK) the chain is Cytoplasmic. Residues 101–121 (FMFIAGMFVSGGVTILFGVLD) traverse the membrane as a helical segment. Topologically, residues 122–127 (QLPEGP) are extracellular. Residues 128–148 (IFIAMCFLVRIVDAIGFGAAI) traverse the membrane as a helical segment. Residues 149–167 (TASSSILAKAFPNNVATVM) are Cytoplasmic-facing. The helical transmembrane segment at 168–188 (GSLEVFSGLGLVAGPPLGGLL) threads the bilayer. Residues 189–195 (YQSFGYE) lie on the Extracellular side of the membrane. Residues 196 to 216 (VPFIFLGCIVLLMIPLNLYIL) form a helical membrane-spanning segment. The Cytoplasmic portion of the chain corresponds to 217 to 235 (PSYAQESDPGKQSFWKLVT). A helical transmembrane segment spans residues 236 to 256 (LPKMGLLAFVIISLSSCFGFL). The Extracellular portion of the chain corresponds to 257-274 (DPTLSLFVMEKFSLSTGY). A helical transmembrane segment spans residues 275–295 (VGLVFLGLSLSYAISSPLFGL). The Cytoplasmic segment spans residues 296-306 (LSDKMPTLRKW). A helical membrane pass occupies residues 307-327 (LLVFGNLITAGCYMLLGPVPL). The Extracellular portion of the chain corresponds to 328–333 (LHIKSQ). The helical transmembrane segment at 334–354 (LWLLVLVLVVNGISAGMSIIP) threads the bilayer. The Cytoplasmic portion of the chain corresponds to 355–379 (TFPEMLSCAYANGFEDSISTLGLVS). The helical transmembrane segment at 380–400 (GLFGAMWSVGAFMGPILGGFL) threads the bilayer. The Extracellular segment spans residues 401–409 (CEKIGFEWA). Residues 410–430 (AAMQGLWTLLSGVSMALFYLW) traverse the membrane as a helical segment. The Cytoplasmic segment spans residues 431 to 459 (EDSTARRRSKAQNSLGTEEERAALLPNDT). Residues 440-459 (KAQNSLGTEEERAALLPNDT) form a disordered region.

Belongs to the major facilitator superfamily. As to expression, widely expressed, with highest expression in the lung, pancreas and kidney. High expression in the CNS, particularly in the hypothalamus, the thalamus and the cerebellum. In the forebrain, abundantly expressed in the telencephalon, especially in the cerebral cortex layers, except layer 1, as well as in the induseum griseum, the piriform area, the taenia tecta, dorsal part and in the entorhinal area, lateral part. Lower levels in the bed anterior olfactory nucleus, posteroventral part and in layer two of the olfactory tubercle. In the amygdala, high levels observed in the intercalated nucleus and the medial nucleus. In the diencephalon, expressed in the nuclei in both the hypothalamus and thalamus. Among the hypothalamic areas, strongest expression in the arcuate nucleus and in the ventromedial nucleus, as well as in the suprachiasmatic nucleus, anterior nucleus, especially in its central part, and in the magnocellular division of the paraventricular nucleus. In the thalamus, highest levels in the medial habenula. Expression also observed in the paraventricular thalamic nucleus, parataenial nucleus, central medial nucleus, intermediodorsal nucleus and lateral dorsal nucleus. In the hindbrain, detected in the cerebellum and in the pons. In the midbrain and the medulla, expression levels were modest. In the midbrain, highest expression in the periaqueductal gray and all subdivisions of the interpeduncular nucleus, except for the caudal part. In the pons, the strongest labeling was seen in the nucleus incertus and in the tegmental nucleus. Expressed in bone marrow-derived mast cells (at protein level).

Its subcellular location is the cytoplasmic vesicle. It is found in the secretory vesicle membrane. The protein localises to the secretory vesicle. The protein resides in the synaptic vesicle membrane. It catalyses the reaction spermine(in) + n H(+)(out) = spermine(out) + n H(+)(in). The catalysed reaction is spermidine(in) + n H(+)(out) = spermidine(out) + n H(+)(in). The enzyme catalyses serotonin(in) + n H(+)(out) = serotonin(out) + n H(+)(in). In terms of biological role, proton-coupled polyamine antiporter involved in the translocation of polyamines from cytosol into secretory vesicles prior to their release via exocytosis. Uses the electrochemical proton gradient generated by a V-type proton-pumping ATPase to couple the efflux of protons with the uptake of a polyamine molecule. Facilitates vesicular storage of spermine and spermidine in astrocytes with an impact on glutamatergic neuronal transmission and memory formation. Upon antigen stimulation, regulates polyamine accumulation and release in mast cell secretory granules, which in turn potentiates mast cell degranulation and histamine secretion. This is MFS-type transporter SLC18B1 from Mus musculus (Mouse).